The sequence spans 271 residues: MFSIQQPLLVFSDLDGTLLDSHSYDWQPAAPWLTRLREANVPVILCSSKTSAEMLYLQKTLGLQGLPLIAENGAVIQLAEQWQEIDGFPRIISGISHGEISQVLNTLREKEHFKFTTFDDVDDATIAEWTGLSRSQAALTQLHEASVTLIWRDSDERMAQFTARLNELGLQFMQGARFWHVLDASAGKDQAANWIIATYQQLSGKRPTTLGLGDGPNDAPLLEVMDYAVIVKGLNREGVHLHDEDPARVWRTQREGPEGWREGLDHFFSAR.

Asp-13 (nucleophile) is an active-site residue. The Mg(2+) site is built by Asp-13, Asp-15, and Asp-214.

The protein belongs to the HAD-like hydrolase superfamily. MPGP family. It depends on Mg(2+) as a cofactor.

The protein localises to the cytoplasm. It carries out the reaction 2-O-(alpha-D-mannosyl)-3-phosphoglycerate + H2O = (2R)-2-O-(alpha-D-mannosyl)-glycerate + phosphate. This chain is Mannosyl-3-phosphoglycerate phosphatase, found in Escherichia coli (strain 55989 / EAEC).